A 259-amino-acid polypeptide reads, in one-letter code: Phosphatidylglycerol--prolipoprotein diacylglyceryl transferase (259 aa).

The next 4 membrane-spanning stretches (helical) occupy residues 10 to 30 (IGLL…LFAY), 50 to 70 (IISW…ILFY), 86 to 106 (WKGG…MYIF), and 112 to 132 (IKFL…IFLG). An a 1,2-diacyl-sn-glycero-3-phospho-(1'-sn-glycerol)-binding site is contributed by arginine 133. Helical transmembrane passes span 169–189 (LYEA…LFFF), 197–217 (GMLF…IEFV), and 227–247 (ILFN…ILGI).

Belongs to the Lgt family.

It localises to the cell inner membrane. The catalysed reaction is L-cysteinyl-[prolipoprotein] + a 1,2-diacyl-sn-glycero-3-phospho-(1'-sn-glycerol) = an S-1,2-diacyl-sn-glyceryl-L-cysteinyl-[prolipoprotein] + sn-glycerol 1-phosphate + H(+). It participates in protein modification; lipoprotein biosynthesis (diacylglyceryl transfer). Functionally, catalyzes the transfer of the diacylglyceryl group from phosphatidylglycerol to the sulfhydryl group of the N-terminal cysteine of a prolipoprotein, the first step in the formation of mature lipoproteins. This chain is Phosphatidylglycerol--prolipoprotein diacylglyceryl transferase, found in Ehrlichia ruminantium (strain Gardel).